The following is a 598-amino-acid chain: Elongation factor 4 (598 aa).

Residues 4-185 (KNIRNFSIIA…TIITKIPAPK (182 aa)) enclose the tr-type G domain. Residues 16–21 (DHGKST) and 132–135 (NKID) contribute to the GTP site.

The protein belongs to the TRAFAC class translation factor GTPase superfamily. Classic translation factor GTPase family. LepA subfamily.

It localises to the cell inner membrane. It carries out the reaction GTP + H2O = GDP + phosphate + H(+). Its function is as follows. Required for accurate and efficient protein synthesis under certain stress conditions. May act as a fidelity factor of the translation reaction, by catalyzing a one-codon backward translocation of tRNAs on improperly translocated ribosomes. Back-translocation proceeds from a post-translocation (POST) complex to a pre-translocation (PRE) complex, thus giving elongation factor G a second chance to translocate the tRNAs correctly. Binds to ribosomes in a GTP-dependent manner. The protein is Elongation factor 4 of Campylobacter jejuni subsp. jejuni serotype O:2 (strain ATCC 700819 / NCTC 11168).